A 211-amino-acid chain; its full sequence is Small ribosomal subunit protein uS4 (211 aa).

Positions 98-161 (RRLDNVVYRL…RDIPFIKENL (64 aa)) constitute an S4 RNA-binding domain.

It belongs to the universal ribosomal protein uS4 family. Part of the 30S ribosomal subunit. Contacts protein S5. The interaction surface between S4 and S5 is involved in control of translational fidelity.

One of the primary rRNA binding proteins, it binds directly to 16S rRNA where it nucleates assembly of the body of the 30S subunit. Functionally, with S5 and S12 plays an important role in translational accuracy. This Aquifex aeolicus (strain VF5) protein is Small ribosomal subunit protein uS4.